A 218-amino-acid polypeptide reads, in one-letter code: Heart- and neural crest derivatives-expressed protein 1 (218 aa).

Disordered stretches follow at residues 1–23 (MNLV…HPAH), 56–112 (APDF…RTES), and 172–203 (ADGG…RIKG). Over residues 8-21 (AHHHHHHHHHHPHP) the composition is skewed to basic residues. Over residues 68-92 (AAAAAASYGPDARPGQSPGRLEALG) the composition is skewed to low complexity. The segment covering 95–107 (LGRRKGSGPKKER) has biased composition (basic residues). Residues 97–149 (RRKGSGPKKERRRTESINSAFAELRECIPNVPADTKLSKIKTLRLATSYIAYL) form the bHLH domain. A Phosphothreonine; by PLK4 modification is found at threonine 110. Residue serine 112 is modified to Phosphoserine; by PLK4.

In terms of assembly, efficient DNA binding requires dimerization with another bHLH protein. Forms homodimers and heterodimers with TCF3 gene products E12 and E47, HAND2 and HEY1, HEY2 and HEYL (hairy-related transcription factors). Interacts with MDFIC. Interacts with SOX15; the interaction enhances HAND1-induced differentiation of trophoblast giant cells. In terms of processing, phosphorylation by PLK4 disrupts the interaction with MDFIC and leads to translocation into the nucleoplasm, allowing dimerization and transcription factor activity.

The protein resides in the nucleus. The protein localises to the nucleoplasm. It localises to the nucleolus. Transcription factor that plays an essential role in both trophoblast giant cell differentiation and in cardiac morphogenesis. Binds the DNA sequence 5'-NRTCTG-3' (non-canonical E-box). Acts as a transcriptional repressor of SOX15. In the adult, could be required for ongoing expression of cardiac-specific genes. This is Heart- and neural crest derivatives-expressed protein 1 (HAND1) from Bos taurus (Bovine).